Consider the following 137-residue polypeptide: ATP synthase epsilon chain, chloroplastic (137 aa).

Belongs to the ATPase epsilon chain family. F-type ATPases have 2 components, CF(1) - the catalytic core - and CF(0) - the membrane proton channel. CF(1) has five subunits: alpha(3), beta(3), gamma(1), delta(1), epsilon(1). CF(0) has three main subunits: a, b and c.

It is found in the plastid. It localises to the chloroplast thylakoid membrane. In terms of biological role, produces ATP from ADP in the presence of a proton gradient across the membrane. The sequence is that of ATP synthase epsilon chain, chloroplastic from Pinus koraiensis (Korean pine).